Here is a 471-residue protein sequence, read N- to C-terminus: Ubiquitin carboxyl-terminal hydrolase calypso (471 aa).

In terms of domain architecture, UCH catalytic spans 45 to 276 (GWLELESDPG…IRFNLMAVVP (232 aa)). Catalysis depends on cysteine 131, which acts as the Nucleophile. Catalysis depends on histidine 213, which acts as the Proton donor. The disordered stretch occupies residues 307–326 (DEQGESGNGDSQRPDTPTTL). Residues 314–326 (NGDSQRPDTPTTL) are compositionally biased toward polar residues. In terms of domain architecture, ULD spans 375–403 (NYDKFICTFLSMLAHQGVLGELVSQHLLP). Positions 405-471 (KKVSGQGAAN…KGRNKCRKRK (67 aa)) are positively charged C-terminal tail required for binding nucleosomes. The segment at 412–471 (AANRISKQSNTASAGGSTTGASASTPKTQQQQAAAAKNGKSPSKTPGRRRKGRNKCRKRK) is disordered. Residues 422 to 447 (TASAGGSTTGASASTPKTQQQQAAAA) show a composition bias toward low complexity. A compositionally biased stretch (basic residues) spans 457 to 471 (PGRRRKGRNKCRKRK).

Belongs to the peptidase C12 family. BAP1 subfamily. In terms of assembly, catalytic component of the polycomb repressive deubiquitinase (PR-DUB) complex, at least composed of caly/calypso, Asx and sba (MBD5/6 homolog). The PR-DUB complex associates with nucleosomes to mediate deubiquitination of histone H2AK118ub1 substrates; the association requires the positively charged C-terminal tail of caly, probably due to direct binding of DNA. Interacts (via ULD domain) with Asx (via DEUBAD domain); the interaction produces a stable heterodimer with a composite binding site for ubiquitin. Homodimerizes (via coiled-coil hinge-region between the UCH and ULD domains) to mediate assembly of 2 copies of the caly-Asx heterodimer into a bisymmetric tetramer; dimerization enhances PR-DUB association with nucleosomes.

The protein localises to the nucleus. It carries out the reaction Thiol-dependent hydrolysis of ester, thioester, amide, peptide and isopeptide bonds formed by the C-terminal Gly of ubiquitin (a 76-residue protein attached to proteins as an intracellular targeting signal).. In terms of biological role, catalytic component of the polycomb repressive deubiquitinase (PR-DUB) complex, a complex that specifically mediates deubiquitination of histone H2A monoubiquitinated at 'Lys-119' (H2AK118ub1). Mediates bisymmetric organization of the PR-DUB complex and is involved in association with nucleosomes to mediate deubiquitination. Does not deubiquitinate monoubiquitinated histone H2B. Required to maintain the transcriptionally repressive state of homeotic genes throughout development. The PR-DUB complex has weak or no activity toward 'Lys-48'- and 'Lys-63'-linked polyubiquitin chains. Polycomb group (PcG) protein. In Drosophila sechellia (Fruit fly), this protein is Ubiquitin carboxyl-terminal hydrolase calypso.